Reading from the N-terminus, the 179-residue chain is NADH-quinone oxidoreductase subunit I (179 aa).

4Fe-4S ferredoxin-type domains follow at residues 45–74 (RHPD…VEAA) and 90–119 (KVYE…LGNE). The [4Fe-4S] cluster site is built by cysteine 54, cysteine 57, cysteine 60, cysteine 64, cysteine 99, cysteine 102, cysteine 105, and cysteine 109. The segment at 146–179 (PQRREAQRTGKPVRLGFKVPKGPRPELEGVEYPR) is disordered. Residues 168 to 179 (PRPELEGVEYPR) are compositionally biased toward basic and acidic residues.

This sequence belongs to the complex I 23 kDa subunit family. In terms of assembly, NDH-1 is composed of 15 different subunits. Subunits NuoA, H, J, K, L, M, N constitute the membrane sector of the complex. [4Fe-4S] cluster is required as a cofactor.

It is found in the cell membrane. The catalysed reaction is a quinone + NADH + 5 H(+)(in) = a quinol + NAD(+) + 4 H(+)(out). Its function is as follows. NDH-1 shuttles electrons from NADH, via FMN and iron-sulfur (Fe-S) centers, to quinones in the respiratory chain. The immediate electron acceptor for the enzyme in this species is believed to be ubiquinone. Couples the redox reaction to proton translocation (for every two electrons transferred, four hydrogen ions are translocated across the cytoplasmic membrane), and thus conserves the redox energy in a proton gradient. The polypeptide is NADH-quinone oxidoreductase subunit I (Deinococcus geothermalis (strain DSM 11300 / CIP 105573 / AG-3a)).